The primary structure comprises 124 residues: CLAVATA3/ESR (CLE)-related protein 45 (124 aa).

The signal sequence occupies residues Met-1 to Ala-20. N-linked (GlcNAc...) asparagine glycosylation is found at Asn-25 and Asn-96. Residues Leu-71–Val-109 adopt a coiled-coil conformation. Over residues Lys-87–Lys-103 the composition is skewed to basic and acidic residues. The interval Lys-87–Ser-124 is disordered.

Belongs to the CLV3/ESR signal peptide family. Binds to SKM1 present in the pollen grain, particularly under relatively high temperature (at 30 degrees Celsius). Interacts with BAM3, especially in roots. Expressed at low levels in flowers, especially in pistils. Present in vascular tissues. In roots, confined to protophloem and sieve element precursor cells.

The protein resides in the secreted. It is found in the extracellular space. Its function is as follows. Extracellular signal peptide that regulates cell fate. Represses root apical meristem maintenance. Represses protophloem differentiation in a BAM3-dependent manner. BRX, BAM3, and CLE45 act together to regulate the transition of protophloem cells from proliferation to differentiation, thus impinging on postembryonic growth capacity of the root meristem; this signaling pathway requires CRN and CLV2 and involves MAKR5 for its transduction/amplification. Triggers the accumulation of MAKR5 in developing sieve elements in a BAM3-dependent manner. Prevents, in a dose-dependent manner, auxin response in the root meristem thus leading in the repression of protophloem differentiation and periclinal sieve element precursor cell division. Promotes pollen tube growth prolongation in a SKM1 and SKM2-dependent manner, especially under relatively high temperature (at 30 degrees Celsius), thus conferring tolerance against high temperature probably through the maintenance of mitochondrial activity. Alleviates mitochondrial decay pollen tube in vitro culture. In Arabidopsis thaliana (Mouse-ear cress), this protein is CLAVATA3/ESR (CLE)-related protein 45.